A 226-amino-acid chain; its full sequence is Cytidylate kinase (226 aa).

Glycine 9–threonine 17 contributes to the ATP binding site.

Belongs to the cytidylate kinase family. Type 1 subfamily.

Its subcellular location is the cytoplasm. It catalyses the reaction CMP + ATP = CDP + ADP. The catalysed reaction is dCMP + ATP = dCDP + ADP. The chain is Cytidylate kinase from Clostridium tetani (strain Massachusetts / E88).